The sequence spans 675 residues: Heat shock 70 kDa protein, mitochondrial (675 aa).

The N-terminal 51 residues, 1–51 (MAAVLRSLRRRDVASATFSAYRSLTGSTKPAYVAQKWSCLARPFSSRPAGN), are a transit peptide targeting the mitochondrion. The tract at residues 638–675 (VSKIGEHMSGGSSGGSSAGGSQGGGDQAPEAEYEEVKK) is disordered. Residues 648-663 (GSSGGSSAGGSQGGGD) show a composition bias toward gly residues. Residues 666-675 (PEAEYEEVKK) are compositionally biased toward acidic residues.

It belongs to the heat shock protein 70 family.

The protein localises to the mitochondrion. The chain is Heat shock 70 kDa protein, mitochondrial from Phaseolus vulgaris (Kidney bean).